A 195-amino-acid chain; its full sequence is Orotate phosphoribosyltransferase (195 aa).

117-125 (EDITTTGGS) provides a ligand contact to 5-phospho-alpha-D-ribose 1-diphosphate. Orotate is bound by residues Thr121 and Arg149.

It belongs to the purine/pyrimidine phosphoribosyltransferase family. PyrE subfamily. Homodimer. It depends on Mg(2+) as a cofactor.

It catalyses the reaction orotidine 5'-phosphate + diphosphate = orotate + 5-phospho-alpha-D-ribose 1-diphosphate. It functions in the pathway pyrimidine metabolism; UMP biosynthesis via de novo pathway; UMP from orotate: step 1/2. Catalyzes the transfer of a ribosyl phosphate group from 5-phosphoribose 1-diphosphate to orotate, leading to the formation of orotidine monophosphate (OMP). The chain is Orotate phosphoribosyltransferase from Acidithiobacillus ferrooxidans (strain ATCC 53993 / BNL-5-31) (Leptospirillum ferrooxidans (ATCC 53993)).